The sequence spans 127 residues: Mitochondrial pyruvate carrier 2 (127 aa).

The Mitochondrial matrix segment spans residues 2-40; it reads SAAGARGLRATYHRLLDKVELMLPEKLRPLYNHPAGPRT. A helical membrane pass occupies residues 41 to 61; it reads VFFWAPIMKWGLVCAGLADMA. Residues 62 to 72 are Mitochondrial intermembrane-facing; sequence RPAEKLSTAQS. A helical transmembrane segment spans residues 73 to 90; the sequence is AVLMATGFIWSRYSLVII. At 91–95 the chain is on the mitochondrial matrix side; that stretch reads PKNWS. A helical transmembrane segment spans residues 96–115; the sequence is LFAVNFFVGAAGASQLFRIW. The Mitochondrial intermembrane segment spans residues 116–127; the sequence is RYNQELKAKAHK.

It belongs to the mitochondrial pyruvate carrier (MPC) (TC 2.A.105) family. As to quaternary structure, homodimer. Homooligomer. Forms heterodimers with MPC1 and MPC1L. The heterodimer is the more stable and dominant form.

Its subcellular location is the mitochondrion inner membrane. The enzyme catalyses pyruvate(out) + H(+)(out) = pyruvate(in) + H(+)(in). Functionally, mediates the uptake of pyruvate into mitochondria. This chain is Mitochondrial pyruvate carrier 2 (MPC2), found in Homo sapiens (Human).